Here is a 226-residue protein sequence, read N- to C-terminus: MEQEICAISFSGGQDSTTLAVWAKKRFKKVYLVGFDYAQKHSVELECAQKIASLLQLPYEIIPLDFLENITHSALFKNSNDLMGHSHAQNKDLPNSFVPNRNAIFITLLHSYAQKIGASNIALGVSQADFSGYPDCKEDFIKSIEHALNLGSNTAIKILTPLMFLNKAQEFQMAKDLGVLDLVIKETHTCYQGERKILHAYGYGCGECPACQLRKKGYEEFESNKK.

10-20 serves as a coordination point for ATP; that stretch reads FSGGQDSTTLA. Residues C190, C205, C208, and C211 each contribute to the Zn(2+) site.

Belongs to the QueC family. It depends on Zn(2+) as a cofactor.

It catalyses the reaction 7-carboxy-7-deazaguanine + NH4(+) + ATP = 7-cyano-7-deazaguanine + ADP + phosphate + H2O + H(+). It participates in purine metabolism; 7-cyano-7-deazaguanine biosynthesis. Catalyzes the ATP-dependent conversion of 7-carboxy-7-deazaguanine (CDG) to 7-cyano-7-deazaguanine (preQ(0)). The polypeptide is 7-cyano-7-deazaguanine synthase (Helicobacter pylori (strain Shi470)).